A 240-amino-acid polypeptide reads, in one-letter code: Large ribosomal subunit protein uL2 (240 aa).

The span at 1-20 shows a compositional bias: polar residues; it reads MGKRLQSQNRGKGTPRYTSP. Disordered regions lie at residues 1–33 and 204–240; these read MGKR…YRKF and PFGG…TGKR. 2 stretches are compositionally biased toward basic residues: residues 21-30 and 224-240; these read THKRKGAVKY and SPGR…TGKR.

It belongs to the universal ribosomal protein uL2 family. Part of the 50S ribosomal subunit. Forms a bridge to the 30S subunit in the 70S ribosome.

Functionally, one of the primary rRNA binding proteins. Required for association of the 30S and 50S subunits to form the 70S ribosome, for tRNA binding and peptide bond formation. It has been suggested to have peptidyltransferase activity; this is somewhat controversial. Makes several contacts with the 16S rRNA in the 70S ribosome. The protein is Large ribosomal subunit protein uL2 of Methanococcus aeolicus (strain ATCC BAA-1280 / DSM 17508 / OCM 812 / Nankai-3).